The primary structure comprises 34 residues: Beta-theraphotoxin-Pmu1a (34 aa).

3 disulfides stabilise this stretch: cysteine 3/cysteine 18, cysteine 10/cysteine 23, and cysteine 17/cysteine 30. Residue leucine 34 is modified to Leucine amide.

It belongs to the neurotoxin 10 (Hwtx-1) family. 34 (Jztx-26) subfamily. As to expression, expressed by the venom gland.

Its subcellular location is the secreted. Its function is as follows. Spider venom neurotoxin that blocks voltage-gated sodium channels Nav1.3/SCN3A and Nav1.8/SCN10A in human (IC(50)=2 uM and IC(50)=4 uM, respectively) and rat (IC(50)=2 uM and IC(50)=2.5 uM, respectively). This Pterinochilus murinus (Mombasa golden starburst baboon spider) protein is Beta-theraphotoxin-Pmu1a.